Reading from the N-terminus, the 491-residue chain is UDP-N-acetylmuramate--L-alanine ligase (491 aa).

Residue glycine 126–threonine 132 coordinates ATP.

Belongs to the MurCDEF family.

It is found in the cytoplasm. It catalyses the reaction UDP-N-acetyl-alpha-D-muramate + L-alanine + ATP = UDP-N-acetyl-alpha-D-muramoyl-L-alanine + ADP + phosphate + H(+). The protein operates within cell wall biogenesis; peptidoglycan biosynthesis. Cell wall formation. In Salmonella paratyphi A (strain ATCC 9150 / SARB42), this protein is UDP-N-acetylmuramate--L-alanine ligase.